Here is a 618-residue protein sequence, read N- to C-terminus: UvrABC system protein C (618 aa).

A GIY-YIG domain is found at 19–97 (SEPGIYRMLD…IKALRPKYNV (79 aa)). In terms of domain architecture, UVR spans 208 to 243 (QIILDELAERMKNAVSQLNFEEAAVLRDQIKNLRLI).

The protein belongs to the UvrC family. As to quaternary structure, interacts with UvrB in an incision complex.

Its subcellular location is the cytoplasm. In terms of biological role, the UvrABC repair system catalyzes the recognition and processing of DNA lesions. UvrC both incises the 5' and 3' sides of the lesion. The N-terminal half is responsible for the 3' incision and the C-terminal half is responsible for the 5' incision. The sequence is that of UvrABC system protein C from Legionella pneumophila (strain Lens).